A 353-amino-acid polypeptide reads, in one-letter code: N-acetyl-gamma-glutamyl-phosphate reductase (353 aa).

Residue C155 is part of the active site.

It belongs to the NAGSA dehydrogenase family. Type 1 subfamily.

Its subcellular location is the cytoplasm. It catalyses the reaction N-acetyl-L-glutamate 5-semialdehyde + phosphate + NADP(+) = N-acetyl-L-glutamyl 5-phosphate + NADPH + H(+). It functions in the pathway amino-acid biosynthesis; L-arginine biosynthesis; N(2)-acetyl-L-ornithine from L-glutamate: step 3/4. Functionally, catalyzes the NADPH-dependent reduction of N-acetyl-5-glutamyl phosphate to yield N-acetyl-L-glutamate 5-semialdehyde. The protein is N-acetyl-gamma-glutamyl-phosphate reductase of Microcystis aeruginosa (strain NIES-843 / IAM M-2473).